Here is a 191-residue protein sequence, read N- to C-terminus: Heme-binding protein 1 (191 aa).

It belongs to the HEBP family. As to quaternary structure, monomer.

The protein localises to the cytoplasm. In terms of biological role, may bind free porphyrinogens that may be present in the cell and thus facilitate removal of these potentially toxic compound. Binds with a high affinity to one molecule of heme or porphyrins. It binds metalloporphyrins, free porphyrins and N-methylprotoporphyrin with similar affinities. The polypeptide is Heme-binding protein 1 (HEBP1) (Bos taurus (Bovine)).